The sequence spans 560 residues: Proteasome-associated ATPase (560 aa).

Positions 1 to 19 are enriched in basic and acidic residues; the sequence is MSQQHDDRRPPDTADRDLA. The disordered stretch occupies residues 1-21; the sequence is MSQQHDDRRPPDTADRDLARQ. A coiled-coil region spans residues 16 to 55; sequence RDLARQATSLAEKNERLTAALTAARAQLVEMKAQLEEVSK. Position 237–242 (237–242) interacts with ATP; sequence GCGKTL. A docks into pockets in the proteasome alpha-ring region spans residues 559 to 560; the sequence is YL.

Belongs to the AAA ATPase family. In terms of assembly, homohexamer. Assembles into a hexameric ring structure that caps the 20S proteasome core. Strongly interacts with the prokaryotic ubiquitin-like protein Pup through a hydrophobic interface; the interacting region of ARC lies in its N-terminal coiled-coil domain. There is one Pup binding site per ARC hexamer ring. Upon ATP-binding, the C-terminus of ARC interacts with the alpha-rings of the proteasome core, possibly by binding to the intersubunit pockets.

The protein operates within protein degradation; proteasomal Pup-dependent pathway. Functionally, ATPase which is responsible for recognizing, binding, unfolding and translocation of pupylated proteins into the bacterial 20S proteasome core particle. May be essential for opening the gate of the 20S proteasome via an interaction with its C-terminus, thereby allowing substrate entry and access to the site of proteolysis. Thus, the C-termini of the proteasomal ATPase may function like a 'key in a lock' to induce gate opening and therefore regulate proteolysis. The protein is Proteasome-associated ATPase of Beutenbergia cavernae (strain ATCC BAA-8 / DSM 12333 / CCUG 43141 / JCM 11478 / NBRC 16432 / NCIMB 13614 / HKI 0122).